The sequence spans 223 residues: ATP-dependent dethiobiotin synthetase BioD (223 aa).

Mg(2+) is bound at residue Thr-16. Residue Lys-37 is part of the active site. Ser-41 contributes to the substrate binding site. Residues Asp-50 and Glu-111 each coordinate Mg(2+). Residues Asp-50, Glu-111–Gly-114, and Asn-171–Arg-172 each bind ATP.

It belongs to the dethiobiotin synthetase family. In terms of assembly, homodimer. Mg(2+) is required as a cofactor.

The protein localises to the cytoplasm. It carries out the reaction (7R,8S)-7,8-diammoniononanoate + CO2 + ATP = (4R,5S)-dethiobiotin + ADP + phosphate + 3 H(+). Its pathway is cofactor biosynthesis; biotin biosynthesis; biotin from 7,8-diaminononanoate: step 1/2. Functionally, catalyzes a mechanistically unusual reaction, the ATP-dependent insertion of CO2 between the N7 and N8 nitrogen atoms of 7,8-diaminopelargonic acid (DAPA, also called 7,8-diammoniononanoate) to form a ureido ring. This is ATP-dependent dethiobiotin synthetase BioD from Anaeromyxobacter sp. (strain K).